The following is a 158-amino-acid chain: Transcription elongation factor GreA (158 aa).

Residues 45-72 (AEYHAAREQQSFIEGRIKQLEGELSHAE) adopt a coiled-coil conformation.

This sequence belongs to the GreA/GreB family.

Necessary for efficient RNA polymerase transcription elongation past template-encoded arresting sites. The arresting sites in DNA have the property of trapping a certain fraction of elongating RNA polymerases that pass through, resulting in locked ternary complexes. Cleavage of the nascent transcript by cleavage factors such as GreA or GreB allows the resumption of elongation from the new 3'terminus. GreA releases sequences of 2 to 3 nucleotides. The chain is Transcription elongation factor GreA from Xylella fastidiosa (strain M12).